We begin with the raw amino-acid sequence, 308 residues long: 4-hydroxy-3-methylbut-2-enyl diphosphate reductase (308 aa).

Position 12 (Cys-12) interacts with [4Fe-4S] cluster. Positions 43 and 77 each coordinate (2E)-4-hydroxy-3-methylbut-2-enyl diphosphate. Dimethylallyl diphosphate contacts are provided by His-43 and His-77. The isopentenyl diphosphate site is built by His-43 and His-77. Residue Cys-99 participates in [4Fe-4S] cluster binding. His-127 serves as a coordination point for (2E)-4-hydroxy-3-methylbut-2-enyl diphosphate. His-127 is a binding site for dimethylallyl diphosphate. His-127 contributes to the isopentenyl diphosphate binding site. The Proton donor role is filled by Glu-129. (2E)-4-hydroxy-3-methylbut-2-enyl diphosphate is bound at residue Thr-167. Cys-197 contributes to the [4Fe-4S] cluster binding site. (2E)-4-hydroxy-3-methylbut-2-enyl diphosphate contacts are provided by Ser-225, Ser-226, Asn-227, and Ser-269. Positions 225, 226, 227, and 269 each coordinate dimethylallyl diphosphate. Positions 225, 226, 227, and 269 each coordinate isopentenyl diphosphate.

This sequence belongs to the IspH family. Requires [4Fe-4S] cluster as cofactor.

The enzyme catalyses isopentenyl diphosphate + 2 oxidized [2Fe-2S]-[ferredoxin] + H2O = (2E)-4-hydroxy-3-methylbut-2-enyl diphosphate + 2 reduced [2Fe-2S]-[ferredoxin] + 2 H(+). It catalyses the reaction dimethylallyl diphosphate + 2 oxidized [2Fe-2S]-[ferredoxin] + H2O = (2E)-4-hydroxy-3-methylbut-2-enyl diphosphate + 2 reduced [2Fe-2S]-[ferredoxin] + 2 H(+). It participates in isoprenoid biosynthesis; dimethylallyl diphosphate biosynthesis; dimethylallyl diphosphate from (2E)-4-hydroxy-3-methylbutenyl diphosphate: step 1/1. Its pathway is isoprenoid biosynthesis; isopentenyl diphosphate biosynthesis via DXP pathway; isopentenyl diphosphate from 1-deoxy-D-xylulose 5-phosphate: step 6/6. Catalyzes the conversion of 1-hydroxy-2-methyl-2-(E)-butenyl 4-diphosphate (HMBPP) into a mixture of isopentenyl diphosphate (IPP) and dimethylallyl diphosphate (DMAPP). Acts in the terminal step of the DOXP/MEP pathway for isoprenoid precursor biosynthesis. This chain is 4-hydroxy-3-methylbut-2-enyl diphosphate reductase, found in Wolbachia pipientis subsp. Culex pipiens (strain wPip).